We begin with the raw amino-acid sequence, 390 residues long: Mannitol-1-phosphate 5-dehydrogenase (390 aa).

3–14 (ALHFGAGNIGRG) contacts NAD(+).

It belongs to the mannitol dehydrogenase family.

The enzyme catalyses D-mannitol 1-phosphate + NAD(+) = beta-D-fructose 6-phosphate + NADH + H(+). The chain is Mannitol-1-phosphate 5-dehydrogenase from Buchnera aphidicola subsp. Baizongia pistaciae (strain Bp).